A 302-amino-acid chain; its full sequence is Oxygen-dependent coproporphyrinogen-III oxidase (302 aa).

S94 is a substrate binding site. Residues H98 and H108 each contribute to the a divalent metal cation site. Catalysis depends on H108, which acts as the Proton donor. 110–112 serves as a coordination point for substrate; it reads NVR. H147 and H177 together coordinate a divalent metal cation. The interval 242-277 is important for dimerization; it reads YVEFNLVYDRGTIFGLQSGGRTESILMSLPPLVRWD. 260-262 provides a ligand contact to substrate; the sequence is GGR.

It belongs to the aerobic coproporphyrinogen-III oxidase family. Homodimer. A divalent metal cation is required as a cofactor.

Its subcellular location is the cytoplasm. The catalysed reaction is coproporphyrinogen III + O2 + 2 H(+) = protoporphyrinogen IX + 2 CO2 + 2 H2O. It participates in porphyrin-containing compound metabolism; protoporphyrin-IX biosynthesis; protoporphyrinogen-IX from coproporphyrinogen-III (O2 route): step 1/1. In terms of biological role, involved in the heme biosynthesis. Catalyzes the aerobic oxidative decarboxylation of propionate groups of rings A and B of coproporphyrinogen-III to yield the vinyl groups in protoporphyrinogen-IX. The chain is Oxygen-dependent coproporphyrinogen-III oxidase from Alcanivorax borkumensis (strain ATCC 700651 / DSM 11573 / NCIMB 13689 / SK2).